Here is a 551-residue protein sequence, read N- to C-terminus: Membrane protein insertase YidC (551 aa).

The helical transmembrane segment at 3–23 threads the bilayer; sequence ANHIRILLLVTIAIMFISLMG. The interval 33–55 is disordered; sequence NTKQQTSATQNNSHYDNADSSTN. Transmembrane regions (helical) follow at residues 361 to 381, 431 to 451, and 504 to 524; these read LVGN…LIFY, LSGC…YWVL, and VMMF…SGLV.

It belongs to the OXA1/ALB3/YidC family. Type 1 subfamily. In terms of assembly, interacts with the Sec translocase complex via SecD. Specifically interacts with transmembrane segments of nascent integral membrane proteins during membrane integration.

Its subcellular location is the cell inner membrane. Functionally, required for the insertion and/or proper folding and/or complex formation of integral membrane proteins into the membrane. Involved in integration of membrane proteins that insert both dependently and independently of the Sec translocase complex, as well as at least some lipoproteins. Aids folding of multispanning membrane proteins. The protein is Membrane protein insertase YidC of Francisella tularensis subsp. holarctica (strain OSU18).